We begin with the raw amino-acid sequence, 192 residues long: UPF0149 protein KPN78578_32810 (192 aa).

It belongs to the UPF0149 family.

The polypeptide is UPF0149 protein KPN78578_32810 (Klebsiella pneumoniae subsp. pneumoniae (strain ATCC 700721 / MGH 78578)).